The sequence spans 222 residues: Octanoyltransferase (222 aa).

Positions 35–214 constitute a BPL/LPL catalytic domain; that stretch reads GTAPELIWLL…HLDGFLARLD (180 aa). Substrate contacts are provided by residues 73 to 80, 145 to 147, and 158 to 160; these read RGGRYTYH, AIG, and GFS. Catalysis depends on C176, which acts as the Acyl-thioester intermediate.

It belongs to the LipB family.

The protein localises to the cytoplasm. The catalysed reaction is octanoyl-[ACP] + L-lysyl-[protein] = N(6)-octanoyl-L-lysyl-[protein] + holo-[ACP] + H(+). It functions in the pathway protein modification; protein lipoylation via endogenous pathway; protein N(6)-(lipoyl)lysine from octanoyl-[acyl-carrier-protein]: step 1/2. Catalyzes the transfer of endogenously produced octanoic acid from octanoyl-acyl-carrier-protein onto the lipoyl domains of lipoate-dependent enzymes. Lipoyl-ACP can also act as a substrate although octanoyl-ACP is likely to be the physiological substrate. The sequence is that of Octanoyltransferase from Novosphingobium aromaticivorans (strain ATCC 700278 / DSM 12444 / CCUG 56034 / CIP 105152 / NBRC 16084 / F199).